The following is a 748-amino-acid chain: Malate synthase G (748 aa).

Acetyl-CoA is bound by residues V141, 148–149, S298, and R335; that span reads RF. Catalysis depends on R362, which acts as the Proton acceptor. Residues R362, E453, and 478–481 each bind glyoxylate; that span reads GFLD. Positions 453 and 481 each coordinate Mg(2+). P562 is a binding site for acetyl-CoA. Cysteine sulfenic acid (-SOH) is present on C639. D653 serves as the catalytic Proton donor.

This sequence belongs to the malate synthase family. GlcB subfamily. Monomer. The cofactor is Mg(2+).

The protein localises to the cytoplasm. The enzyme catalyses glyoxylate + acetyl-CoA + H2O = (S)-malate + CoA + H(+). It participates in carbohydrate metabolism; glyoxylate cycle; (S)-malate from isocitrate: step 2/2. In terms of biological role, involved in the glycolate utilization. Catalyzes the condensation and subsequent hydrolysis of acetyl-coenzyme A (acetyl-CoA) and glyoxylate to form malate and CoA. In Corynebacterium efficiens (strain DSM 44549 / YS-314 / AJ 12310 / JCM 11189 / NBRC 100395), this protein is Malate synthase G.